Here is a 276-residue protein sequence, read N- to C-terminus: MGYVTTKDGVDIFYKDWGPRDAPVIFFHHGWPLSSDDWDAQMLFFLKEGFRVVAHDRRGHGRSTQVWDGHDMDHYADDVAAVVEYLGVQGAVHVGHSTGGGEVAYYVARYPNDPVAKAVLISAVPPLMVKTESNPDGLPKEVFDDLQNQLFKNRSQFYHDVPAGPFYGFNRPGAKVSEPVVLNWWRQGMMGGAKAHYDGIVAFSQTDFTEALKKIEVPVLILHGEDDQVVPFEISGKKSAELVKNGKLISYPGFPHGMPTTEAETINKDLLAFIRS.

An AB hydrolase-1 domain is found at 23–254 (PVIFFHHGWP…NGKLISYPGF (232 aa)). Catalysis depends on residues S97, D227, and H256.

This sequence belongs to the AB hydrolase superfamily. Bacterial non-heme haloperoxidase / perhydrolase family. As to quaternary structure, homodimer.

The catalysed reaction is 3,4-dihydrocoumarin + H2O = 3-(2-hydroxyphenyl)propanoate + H(+). It carries out the reaction peracetic acid + H2O = acetate + H2O2 + H(+). It catalyses the reaction a percarboxylic acid + H2O = a carboxylate + H2O2 + H(+). With respect to regulation, inhibited by the serine protease inhibitors diisopropyl fluorophosphate and phenylmethanesulfonyl fluoride. In terms of biological role, multifunctional enzyme, which shows esterase and perhydrolase activities, and is capable of organic acid-assisted bromination of organic compounds. Catalyzes the hydrolysis of 3,4-dihydrocoumarin. Aromatic lactones other than 3,4-dihydrocoumarin, such as 2-coumaranone and homogentisic acid lactone, are also substrates, but their activities relative to that of 3,4-dihydrocoumarin are quite low. Also catalyzes the hydrolysis of several linear esters, with specificity toward methyl esters. In addition, shows perhydrolase activity and catalyzes the dose- and time-dependent degradation of peracetic acid, a broad-spectrum biocide, to acetic acid and hydrogen peroxide. It suggests that in vivo DCH may play a role in the oxidative stress defense system and detoxify peroxoacids in conjunction with the catalase, i.e. peroxoacids are first hydrolyzed to the corresponding acids and hydrogen peroxide by DCH, and then the resulting hydrogen peroxide is degraded by the catalase. Also shows organic acid-assisted bromination activity toward monochlorodimedon when incubated with hydrogen peroxide and dihydrocoumarin or an organic acid, such as acetate and n-butyrate. In Acinetobacter calcoaceticus, this protein is Bifunctional esterase/perhydrolase DCH.